The primary structure comprises 468 residues: 6-phospho-beta-galactosidase (468 aa).

5 residues coordinate D-galactose 6-phosphate: Gln-19, His-116, Asn-159, Glu-160, and Asn-297. Glu-160 functions as the Proton donor in the catalytic mechanism. Glu-375 serves as the catalytic Nucleophile. Residues Ser-428, Trp-429, Lys-435, and Tyr-437 each contribute to the D-galactose 6-phosphate site.

It belongs to the glycosyl hydrolase 1 family.

The enzyme catalyses a 6-phospho-beta-D-galactoside + H2O = D-galactose 6-phosphate + an alcohol. The protein operates within carbohydrate metabolism; lactose degradation; D-galactose 6-phosphate and beta-D-glucose from lactose 6-phosphate: step 1/1. The protein is 6-phospho-beta-galactosidase of Streptococcus pneumoniae (strain JJA).